Here is a 420-residue protein sequence, read N- to C-terminus: Glucose-1-phosphate adenylyltransferase (420 aa).

Alpha-D-glucose 1-phosphate contacts are provided by residues Y107, G172, 187–188, and S205; that span reads EK.

The protein belongs to the bacterial/plant glucose-1-phosphate adenylyltransferase family. In terms of assembly, homotetramer.

The enzyme catalyses alpha-D-glucose 1-phosphate + ATP + H(+) = ADP-alpha-D-glucose + diphosphate. It functions in the pathway glycan biosynthesis; glycogen biosynthesis. In terms of biological role, involved in the biosynthesis of ADP-glucose, a building block required for the elongation reactions to produce glycogen. Catalyzes the reaction between ATP and alpha-D-glucose 1-phosphate (G1P) to produce pyrophosphate and ADP-Glc. The protein is Glucose-1-phosphate adenylyltransferase of Rhodopseudomonas palustris (strain HaA2).